A 248-amino-acid polypeptide reads, in one-letter code: Anamorsin homolog (248 aa).

Residues 4–129 form an N-terminal SAM-like domain region; the sequence is FKGLQKSLYI…ETGSSARLSF (126 aa). The tract at residues 130–161 is linker; that stretch reads AKKNASAINVWKISGDDEELIDEEELLDEEDK. [2Fe-2S] cluster contacts are provided by Cys-172, Cys-181, Cys-184, and Cys-186. Residues 172 to 186 form a fe-S binding site A region; that stretch reads CSTTGKRKACKNCSC. Cys-209, Cys-212, Cys-220, and Cys-223 together coordinate [4Fe-4S] cluster. 2 consecutive short sequence motifs (cx2C motif) follow at residues 209–212 and 220–223; these read CGNC and CSTC. The fe-S binding site B stretch occupies residues 209–223; the sequence is CGNCYLGDAFRCSTC.

The protein belongs to the anamorsin family. In terms of assembly, monomer. Requires [2Fe-2S] cluster as cofactor. [4Fe-4S] cluster serves as cofactor.

The protein localises to the cytoplasm. It localises to the mitochondrion intermembrane space. Functionally, component of the cytosolic iron-sulfur (Fe-S) protein assembly (CIA) machinery. Required for the maturation of extramitochondrial Fe-S proteins. Part of an electron transfer chain functioning in an early step of cytosolic Fe-S biogenesis, facilitating the de novo assembly of a [4Fe-4S] cluster on the cytosolic Fe-S scaffold complex. Electrons are transferred from NADPH via a FAD- and FMN-containing diflavin oxidoreductase. Together with the diflavin oxidoreductase, also required for the assembly of the diferric tyrosyl radical cofactor of ribonucleotide reductase (RNR), probably by providing electrons for reduction during radical cofactor maturation in the catalytic small subunit. The sequence is that of Anamorsin homolog from Drosophila erecta (Fruit fly).